The chain runs to 418 residues: Gamma-glutamyl phosphate reductase (418 aa).

It belongs to the gamma-glutamyl phosphate reductase family.

It localises to the cytoplasm. It catalyses the reaction L-glutamate 5-semialdehyde + phosphate + NADP(+) = L-glutamyl 5-phosphate + NADPH + H(+). It functions in the pathway amino-acid biosynthesis; L-proline biosynthesis; L-glutamate 5-semialdehyde from L-glutamate: step 2/2. Its function is as follows. Catalyzes the NADPH-dependent reduction of L-glutamate 5-phosphate into L-glutamate 5-semialdehyde and phosphate. The product spontaneously undergoes cyclization to form 1-pyrroline-5-carboxylate. This is Gamma-glutamyl phosphate reductase from Lacticaseibacillus casei (strain BL23) (Lactobacillus casei).